Reading from the N-terminus, the 235-residue chain is Caveolin-1 (235 aa).

The Cytoplasmic portion of the chain corresponds to 1-161 (MSTEQDIKTE…LVSLLALPFT (161 aa)). The interval 29–72 (GEAVVAPEEPKPKKNWFTFGKKKAAPTDETNIEEGGAPGDEPVK) is disordered. Positions 162–182 (IIFAIFFGLLASINVFIIVPL) form an intramembrane region, helical. Residues 183-235 (GKLLSIPGTLLAKLWNWLIHAIFDPIASAVGLIFSNFNIRKYGINQETTAPCV) lie on the Cytoplasmic side of the membrane. Cys234 is lipidated: S-palmitoyl cysteine.

It belongs to the caveolin family. In terms of assembly, homooligomer containing 14-16 monomers per oligomer.

The protein resides in the golgi apparatus membrane. It localises to the cell membrane. Its subcellular location is the membrane. The protein localises to the caveola. In terms of biological role, may act as a scaffolding protein within caveolar membranes. Interacts directly with G-protein alpha subunits and can functionally regulate their activity. The protein is Caveolin-1 (cav-1) of Caenorhabditis elegans.